The primary structure comprises 123 residues: uncharacterized protein (123 aa).

Transmembrane regions (helical) follow at residues 9–31 (LLLR…WISF), 38–56 (VLTL…VFAV), 67–91 (VIAV…AALY), and 98–114 (VSIV…IISA).

To E.coli YhgE.

It localises to the cell membrane. This is an uncharacterized protein from Bacillus subtilis (strain 168).